A 448-amino-acid polypeptide reads, in one-letter code: Noelin-2 (448 aa).

An N-terminal signal peptide occupies residues 1–14 (MRKLRQTGTTIAGG). 2 coiled-coil regions span residues 52-79 (RDGRSRELRQLMEKVQNVSQSMEVLELR) and 130-187 (LEQY…AQKL). N-linked (GlcNAc...) asparagine glycans are attached at residues N68, N149, N269, N304, N393, and N435. Residues 188 to 440 (GCGKLTGVSN…QVLYNVTLFH (253 aa)) enclose the Olfactomedin-like domain. Cysteines 189 and 371 form a disulfide.

Peripherally associated with AMPAR complex. AMPAR complex consists of an inner core made of 4 pore-forming GluA/GRIA proteins (GRIA1, GRIA2, GRIA3 and GRIA4) and 4 major auxiliary subunits arranged in a twofold symmetry. One of the two pairs of distinct binding sites is occupied either by CNIH2, CNIH3 or CACNG2, CACNG3. The other harbors CACNG2, CACNG3, CACNG4, CACNG8 or GSG1L. This inner core of AMPAR complex is complemented by outer core constituents binding directly to the GluA/GRIA proteins at sites distinct from the interaction sites of the inner core constituents. Outer core constituents include at least PRRT1, PRRT2, CKAMP44/SHISA9, FRRS1L and NRN1. The proteins of the inner and outer core serve as a platform for other, more peripherally associated AMPAR constituents, including OLFM2. Alone or in combination, these auxiliary subunits control the gating and pharmacology of the AMPAR complex and profoundly impact their biogenesis and protein processing. Interacts with GRIA2. Interacts with OLFM1 and OLFM3. Interacts with SRF; the interaction promotes dissociation of SRF from the transcriptional repressor HEY2. Interacts with RUNX2. As to expression, expressed in the brain (at protein level). In the developing eye, first detected at 12 dpc in the retinal pigmented epithelium and preferentially expressed in differentiating retinal ganglion cells between 15 and 18 dpc. In the brain, expression is detected mainly in the olfactory bulb, cortex, piriform cortex, olfactory trabeculae, and inferior and superior colliculus. In the adult eye, expression is detected mainly in retinal ganglion cells. Expressed in carotid arteries.

Its subcellular location is the secreted. It is found in the synapse. It localises to the membrane. The protein resides in the nucleus. The protein localises to the cytoplasm. Its function is as follows. Involved in transforming growth factor beta (TGF-beta)-induced smooth muscle differentiation. TGF-beta induces expression and nuclear translocation of OLFM2 where it binds to SRF, causing its dissociation from the transcriptional repressor HEY2/HERP1 and facilitating binding of SRF to target genes. Plays a role in AMPAR complex organization. Is a regulator of vascular smooth-muscle cell (SMC) phenotypic switching, that acts by promoting RUNX2 and inhibiting MYOCD binding to SRF. SMC phenotypic switching is the process through which vascular SMCs undergo transition between a quiescent contractile phenotype and a proliferative synthetic phenotype in response to pathological stimuli. SMC phenotypic plasticity is essential for vascular development and remodeling. The sequence is that of Noelin-2 (Olfm2) from Mus musculus (Mouse).